The sequence spans 247 residues: Carboxy-S-adenosyl-L-methionine synthase (247 aa).

S-adenosyl-L-methionine contacts are provided by residues tyrosine 40, 65–67 (GAS), 90–91 (DN), 122–123 (DI), asparagine 137, and arginine 204.

Belongs to the class I-like SAM-binding methyltransferase superfamily. Cx-SAM synthase family. As to quaternary structure, homodimer.

It catalyses the reaction prephenate + S-adenosyl-L-methionine = carboxy-S-adenosyl-L-methionine + 3-phenylpyruvate + H2O. Its function is as follows. Catalyzes the conversion of S-adenosyl-L-methionine (SAM) to carboxy-S-adenosyl-L-methionine (Cx-SAM). In Pseudomonas fluorescens (strain Pf0-1), this protein is Carboxy-S-adenosyl-L-methionine synthase.